The following is a 242-amino-acid chain: Neuromodulin (242 aa).

Residues methionine 1 to alanine 242 form a disordered region. Residues cysteine 3 and cysteine 4 are each lipidated (S-palmitoyl cysteine). Residues lysine 9–histidine 32 are compositionally biased toward basic and acidic residues. The 30-residue stretch at alanine 31–proline 60 folds into the IQ domain. Residue serine 41 is modified to Phosphoserine; by PHK and PKC. Over residues alanine 66–glutamate 84 the composition is skewed to basic and acidic residues. A compositionally biased stretch (low complexity) spans glycine 85–proline 97. Serine 86 carries the post-translational modification Phosphoserine. The segment covering lysine 98 to glycine 118 has biased composition (basic and acidic residues). Residues alanine 119–proline 134 are compositionally biased toward low complexity. Residues glutamate 143–serine 158 show a composition bias toward polar residues. Phosphoserine is present on residues serine 155, serine 157, and serine 158. Positions lysine 159 to glutamine 171 are enriched in basic and acidic residues. Over residues alanine 172–alanine 204 the composition is skewed to low complexity. Phosphoserine; by CK2 is present on residues serine 206 and serine 207. The segment covering alanine 209–alanine 242 has biased composition (basic and acidic residues).

It belongs to the neuromodulin family. Identified in a complex containing FGFR4, NCAM1, CDH2, PLCG1, FRS2, SRC, SHC1, GAP43 and CTTN. Interacts (via IQ domain) with calmodulin. Binds calmodulin with a greater affinity in the absence of Ca(2+) than in its presence. In terms of processing, phosphorylated. Phosphorylation of this protein by a protein kinase C is specifically correlated with certain forms of synaptic plasticity. Palmitoylated by ZDHHC3. Palmitoylation is regulated by ARF6 and is essential for plasma membrane association and axonal and dendritic filopodia induction. Deacylated by LYPLA2.

The protein localises to the cell membrane. It is found in the cell projection. The protein resides in the growth cone membrane. It localises to the synapse. Its subcellular location is the filopodium membrane. The protein localises to the perikaryon. It is found in the dendrite. The protein resides in the axon. It localises to the cytoplasm. In terms of biological role, this protein is associated with nerve growth. It is a major component of the motile 'growth cones' that form the tips of elongating axons. Plays a role in axonal and dendritic filopodia induction. The protein is Neuromodulin (GAP43) of Bos taurus (Bovine).